We begin with the raw amino-acid sequence, 232 residues long: Ubiquinone biosynthesis O-methyltransferase (232 aa).

Residues arginine 36, glycine 55, aspartate 76, and methionine 120 each contribute to the S-adenosyl-L-methionine site.

Belongs to the methyltransferase superfamily. UbiG/COQ3 family.

It carries out the reaction a 3-demethylubiquinol + S-adenosyl-L-methionine = a ubiquinol + S-adenosyl-L-homocysteine + H(+). It catalyses the reaction a 3-(all-trans-polyprenyl)benzene-1,2-diol + S-adenosyl-L-methionine = a 2-methoxy-6-(all-trans-polyprenyl)phenol + S-adenosyl-L-homocysteine + H(+). The protein operates within cofactor biosynthesis; ubiquinone biosynthesis. O-methyltransferase that catalyzes the 2 O-methylation steps in the ubiquinone biosynthetic pathway. This Burkholderia vietnamiensis (strain G4 / LMG 22486) (Burkholderia cepacia (strain R1808)) protein is Ubiquinone biosynthesis O-methyltransferase.